We begin with the raw amino-acid sequence, 160 residues long: 6,7-dimethyl-8-ribityllumazine synthase (160 aa).

Residues tryptophan 27, 59 to 61, and 81 to 83 contribute to the 5-amino-6-(D-ribitylamino)uracil site; these read AIE and VVI. (2S)-2-hydroxy-3-oxobutyl phosphate is bound at residue 86 to 87; that stretch reads QT. Histidine 89 (proton donor) is an active-site residue. Asparagine 114 lines the 5-amino-6-(D-ribitylamino)uracil pocket. Arginine 128 lines the (2S)-2-hydroxy-3-oxobutyl phosphate pocket.

The protein belongs to the DMRL synthase family. In terms of assembly, homopentamer.

The catalysed reaction is (2S)-2-hydroxy-3-oxobutyl phosphate + 5-amino-6-(D-ribitylamino)uracil = 6,7-dimethyl-8-(1-D-ribityl)lumazine + phosphate + 2 H2O + H(+). Its pathway is cofactor biosynthesis; riboflavin biosynthesis; riboflavin from 2-hydroxy-3-oxobutyl phosphate and 5-amino-6-(D-ribitylamino)uracil: step 1/2. Catalyzes the formation of 6,7-dimethyl-8-ribityllumazine by condensation of 5-amino-6-(D-ribitylamino)uracil with 3,4-dihydroxy-2-butanone 4-phosphate. This is the penultimate step in the biosynthesis of riboflavin. The polypeptide is 6,7-dimethyl-8-ribityllumazine synthase (Mycolicibacterium paratuberculosis (strain ATCC BAA-968 / K-10) (Mycobacterium paratuberculosis)).